The primary structure comprises 283 residues: Homeobox protein BarH-like 2 (283 aa).

Disordered stretches follow at residues 107–141 (AAAA…RRSR) and 198–283 (KGGQ…PPLS). Positions 122 to 132 (SSESETEQPTP) are enriched in polar residues. Positions 139–198 (RSRTIFTELQLMGLEKKFQKQKYLSTPDRLDLAQSLGLTQLQVKTWYQNRRMKWKKMVLK) form a DNA-binding region, homeobox. Over residues 268 to 277 (QPQELSEASS) the composition is skewed to low complexity.

It belongs to the BAR homeobox family. As to expression, nervous system, particularly in the telencephalon, spinal cord, and dorsal root ganglia.

Its subcellular location is the nucleus. Transcription factor. Binds optimally to the DNA consensus sequence 5'-YYTAATGRTTTTY-3'. May control the expression of neural adhesion molecules such as L1 or Ng-CAM during embryonic development of both the central and peripherical nervous system. May be involved in controlling adhesive processes in keratinizing epithelia. This Mus musculus (Mouse) protein is Homeobox protein BarH-like 2 (Barx2).